The following is a 356-amino-acid chain: MGKRKTMQSFNLESFGKNLEKKLRRNPEQLQQPIKNYKSERERDIHELIYTIKSERMFIYKNAHRHLKLALENATLALNLPMLLKDFHVTLKEFDALEASLNAELECLELQYSSDTSELLLPVNSVNTSQNTINENAITTAIASLSVNPVNTSVALSTASTSTSTPTNTTTTTTTTSNSLTKNNNSALVSKPKTRGVRSKPIDMNSSDDEEDDQKDDQDKDDSDEDNVDNTPPLDSNDSKPPSSKTKGISKTKTKGNVSTAITTTTTPITTTDSNIIGTTTTTDDITEESKVKERPPRIFPENCYVCKVTETPYWRRGTDNGVVVDLCNECGLYYMNKEKKERLSRQKHSIKNVLN.

Positions 91 to 119 (LKEFDALEASLNAELECLELQYSSDTSEL) form a coiled coil. Positions 158 to 188 (TASTSTSTPTNTTTTTTTTSNSLTKNNNSAL) are enriched in low complexity. Residues 158 to 294 (TASTSTSTPT…DITEESKVKE (137 aa)) form a disordered region. Acidic residues predominate over residues 206-228 (SSDDEEDDQKDDQDKDDSDEDNV). The span at 260-284 (TAITTTTTPITTTDSNIIGTTTTTD) shows a compositional bias: low complexity. Residues 304–331 (CYVCKVTETPYWRRGTDNGVVVDLCNEC) form a GATA-type zinc finger.

In Dictyostelium discoideum (Social amoeba), this protein is GATA zinc finger domain-containing protein 17 (gtaQ).